The chain runs to 171 residues: 3-hydroxydecanoyl-[acyl-carrier-protein] dehydratase (171 aa).

The active site involves H70.

It belongs to the thioester dehydratase family. FabA subfamily. As to quaternary structure, homodimer.

The protein localises to the cytoplasm. The enzyme catalyses a (3R)-hydroxyacyl-[ACP] = a (2E)-enoyl-[ACP] + H2O. It carries out the reaction (3R)-hydroxydecanoyl-[ACP] = (2E)-decenoyl-[ACP] + H2O. The catalysed reaction is (2E)-decenoyl-[ACP] = (3Z)-decenoyl-[ACP]. The protein operates within lipid metabolism; fatty acid biosynthesis. Its function is as follows. Necessary for the introduction of cis unsaturation into fatty acids. Catalyzes the dehydration of (3R)-3-hydroxydecanoyl-ACP to E-(2)-decenoyl-ACP and then its isomerization to Z-(3)-decenoyl-ACP. Can catalyze the dehydratase reaction for beta-hydroxyacyl-ACPs with saturated chain lengths up to 16:0, being most active on intermediate chain length. This is 3-hydroxydecanoyl-[acyl-carrier-protein] dehydratase from Mesorhizobium japonicum (strain LMG 29417 / CECT 9101 / MAFF 303099) (Mesorhizobium loti (strain MAFF 303099)).